Consider the following 154-residue polypeptide: Ribosome maturation factor RimP (154 aa).

Belongs to the RimP family.

The protein localises to the cytoplasm. Functionally, required for maturation of 30S ribosomal subunits. This chain is Ribosome maturation factor RimP, found in Haemophilus ducreyi (strain 35000HP / ATCC 700724).